The primary structure comprises 52 residues: Stable plasmid inheritance protein (52 aa).

The chain crosses the membrane as a helical span at residues 6-26 (SSLVWCVLIVCLTLLIFTYLT).

Belongs to the Hok/Gef family.

The protein localises to the cell inner membrane. In terms of biological role, toxic component of a type I toxin-antitoxin (TA) system. Part of the plasmid maintenance system, encodes a toxic protein that collapses the transmembrane potential and arrests respiration. When the adjacent non-translated flmB (sok) gene is disrupted FlmA no longer functions in plasmid maintenance (i.e. FlmB probably encodes an antisense antitoxin RNA). Translation of FlmA may be coupled to the upstream flmC gene. The protein is Stable plasmid inheritance protein (flmA) of Escherichia coli O157:H7.